A 99-amino-acid chain; its full sequence is Ubiquitin-related modifier 1 (99 aa).

The residue at position 99 (glycine 99) is a 1-thioglycine. Glycine 99 is covalently cross-linked (Glycyl lysine isopeptide (Gly-Lys) (interchain with K-? in acceptor proteins)).

The protein belongs to the URM1 family. In terms of processing, C-terminal thiocarboxylation occurs in 2 steps, it is first acyl-adenylated (-COAMP) via the hesA/moeB/thiF part of UBA4, then thiocarboxylated (-COSH) via the rhodanese domain of UBA4.

The protein resides in the cytoplasm. It functions in the pathway tRNA modification; 5-methoxycarbonylmethyl-2-thiouridine-tRNA biosynthesis. Acts as a sulfur carrier required for 2-thiolation of mcm(5)S(2)U at tRNA wobble positions of cytosolic tRNA(Lys), tRNA(Glu) and tRNA(Gln). Serves as sulfur donor in tRNA 2-thiolation reaction by being thiocarboxylated (-COSH) at its C-terminus by the MOCS3 homolog UBA4. The sulfur is then transferred to tRNA to form 2-thiolation of mcm(5)S(2)U. Prior mcm(5) tRNA modification by the elongator complex is required for 2-thiolation. Also acts as a ubiquitin-like protein (UBL) that is covalently conjugated via an isopeptide bond to lysine residues of target proteins such as AHP1. The thiocarboxylated form serves as substrate for conjugation and oxidative stress specifically induces the formation of UBL-protein conjugates. The sequence is that of Ubiquitin-related modifier 1 from Yarrowia lipolytica (strain CLIB 122 / E 150) (Yeast).